The sequence spans 232 residues: MDRVAKAREIIEKAKAENRPLVEPEAKEILKLYGIPVPEFKVARNEEEAVKFSGEIGYPVVMKIVSPQIIHKSDAGGVKINIKNDEEAREAFRTIMQNARNYKPDADLWGVIIYRMLPLGREVIVGMIRDPQFGPAVMFGLGGIFVEILKDVSFRVAPITKEDALEMIREIKAYPILAGARGEKPVNIEALADIIVKVGELALELPEIKEIDINPIFAYEDSAIAVDARMIL.

In terms of domain architecture, ATP-grasp spans 27–63; sequence KEILKLYGIPVPEFKVARNEEEAVKFSGEIGYPVVMK. 53–64 provides a ligand contact to ATP; sequence SGEIGYPVVMKI.

The protein belongs to the acetate CoA ligase beta subunit family. As to quaternary structure, heterotetramer of two alpha and two beta subunits.

Its subcellular location is the cytoplasm. It carries out the reaction acetate + ATP + CoA = acetyl-CoA + ADP + phosphate. Activity is dependent on magnesium. Functionally, catalyzes the reversible formation of acetate and ATP from acetyl-CoA by using ADP and phosphate. Can use other substrates such as isobutyryl-CoA, propionyl-CoA and butyryl-CoA, but not indoleacetyl-CoA, phenylacetyl-CoA or succinyl-CoA. Seems to be involved primarily in the conversion of acetyl-CoA to acetate. Participates in the degradation of branched-chain amino acids via branched-chain-acyl-CoA esters. This chain is Acetate--CoA ligase [ADP-forming] I subunit beta, found in Pyrococcus furiosus (strain ATCC 43587 / DSM 3638 / JCM 8422 / Vc1).